The following is a 62-amino-acid chain: Calmodulin regulator protein PCP4 (62 aa).

Residues 1-39 (MSERQSAGATNGKDKTSGDNDGQKKVQEEFDIDMDAPET) form a disordered region. The segment covering 12–28 (GKDKTSGDNDGQKKVQE) has biased composition (basic and acidic residues). An acidic; binds calcium and is required for modulating the calcium-binding kinetics of calmodulin region spans residues 28-40 (EEFDIDMDAPETE). In terms of domain architecture, IQ spans 39 to 62 (TERAAVAIQSQFRKFQKKKAGSQS).

Belongs to the PCP4 family. As to quaternary structure, binds to both calcium-free and calcium-bound calmodulin. The affinity for the calcium-bound form is 50-fold greater.

Functions as a modulator of calcium-binding by calmodulin. Thereby, regulates calmodulin activity and the different processes it controls. For instance, may play a role in neuronal differentiation through activation of calmodulin-dependent kinase signaling pathways. The protein is Calmodulin regulator protein PCP4 of Mus musculus (Mouse).